We begin with the raw amino-acid sequence, 835 residues long: Telomere length regulation protein TEL2 homolog (835 aa).

Disordered stretches follow at residues 455-501 (SADC…LAPY) and 629-648 (LSHE…HSIR). Residues 464 to 473 (ESSPSKSCPK) show a composition bias toward low complexity. Residues 474-486 (AIEKSKMEAKADQ) show a composition bias toward basic and acidic residues. Residues 488–499 (SDSELDSDDDLA) are compositionally biased toward acidic residues. Residues 636-648 (ESRSTGTGQHSIR) show a composition bias toward polar residues.

This sequence belongs to the TEL2 family.

The protein resides in the cytoplasm. The protein localises to the membrane. It is found in the nucleus. Its subcellular location is the chromosome. It localises to the telomere. In terms of biological role, regulator of the DNA damage response (DDR). Part of the TTT complex that is required to stabilize protein levels of the phosphatidylinositol 3-kinase-related protein kinase (PIKK) family proteins. Promotes assembly, stabilizes and maintains the activity of TORC complexes, which regulate cell growth and survival in response to nutrient and hormonal signals. May be involved in telomere length regulation. The polypeptide is Telomere length regulation protein TEL2 homolog (telo2) (Xenopus laevis (African clawed frog)).